The chain runs to 107 residues: MTDQINKLDPDTAIDIAYDIFLEMAGENLDPADIILFNLQFEDHGGVEFVETADDWEQEIGVLIDPDEYAEVWVGLVNEQDEMDDIFAKFLISHKEEDREYHVVWKK.

This sequence belongs to the putative dsDNA mimic protein family.

Functionally, may act as a double-stranded DNA (dsDNA) mimic. Probably regulates the activity of a dsDNA-binding protein. This Histophilus somni (strain 2336) (Haemophilus somnus) protein is Putative double-stranded DNA mimic protein HSM_1473.